Reading from the N-terminus, the 267-residue chain is Acryloyl-CoA reductase electron transfer subunit gamma (267 aa).

In terms of assembly, heterohexadecamer; tetramer of tetramers. Each tetramer is composed of 2 alpha (AcrC), a beta (AcrA) and a gamma (AcrB) subunit.

The protein resides in the cytoplasm. Its function is as follows. Part of the ETF-acryloyl-CoA reductase complex involved in the pathway of L-alanine fermentation. The electron transfer flavoprotein (ETF) serves as a specific electron acceptor for acryloyl-CoA reductase. In Anaerotignum propionicum (Clostridium propionicum), this protein is Acryloyl-CoA reductase electron transfer subunit gamma (acrB).